We begin with the raw amino-acid sequence, 634 residues long: MVRLVLPNPGLEDRIPSLDELEVIEKEEASSRPKWDNKAQYMLTCVGFCVGLGNVWRFPYLCQSHGGGAFMIPFLILLVLEGIPLLHLEFAIGQRLRKGSVGVWSSIHPALKGVGIASMFVSFMVGLYYNTIIAWVMWYFFNSFQEPLPWSECPLNQNQTGYVEECAKSSSVDYFWYRETLNISTSISDSGSIQWWILLCLTCAWSVLYVCTIRGIETTGKAVYITSTLPYVVLTIFLIRGLTLKGATNGIVFLFTPNITELSNPNTWLDAGAQVFYSFSLAFGGLISFSSYNSVHNNCEMDSVIVSIINGFTSVYAATVVYSIIGFRATERFDDCVNTNILTLINGFDLPEGNVTAENFEAYQHWCNATNPEAYAQLTFQTCDINTFLSEGVEGTGLAFIVFTEAITKMPVSPLWSVLFFIMLFCLGLSSMFGNMEGVVVPLQDLNITPKKWPKELLTGLICLGTYLIAFIFTLNSGQYWLSLLDSYAGSIPLLIIAFCEMFAVVYVYGVDRFNKDIEFMIGHKPNIFWQVTWRVVSPLIMLVIFLFFFVIEVNKQLMYSVWDPDYEEFPKSQKVPYPDWVYAVVVIVAGVPCLTIPCFAIYKLIRNYCQKSGDQHGLVNALSTASVNGDLKN.

Over 1–41 (MVRLVLPNPGLEDRIPSLDELEVIEKEEASSRPKWDNKAQY) the chain is Cytoplasmic. Position 17 is a phosphoserine (serine 17). Residues 42 to 62 (MLTCVGFCVGLGNVWRFPYLC) form a helical membrane-spanning segment. Residues 63–65 (QSH) lie on the Extracellular side of the membrane. The chain crosses the membrane as a helical span at residues 66–86 (GGGAFMIPFLILLVLEGIPLL). At 87–119 (HLEFAIGQRLRKGSVGVWSSIHPALKGVGIASM) the chain is on the cytoplasmic side. The chain crosses the membrane as a helical span at residues 120–140 (FVSFMVGLYYNTIIAWVMWYF). Residues 141-192 (FNSFQEPLPWSECPLNQNQTGYVEECAKSSSVDYFWYRETLNISTSISDSGS) are Extracellular-facing. N-linked (GlcNAc...) asparagine glycans are attached at residues asparagine 158 and asparagine 182. Residues 193 to 213 (IQWWILLCLTCAWSVLYVCTI) form a helical membrane-spanning segment. Over 214–221 (RGIETTGK) the chain is Cytoplasmic. A helical transmembrane segment spans residues 222-242 (AVYITSTLPYVVLTIFLIRGL). Over 243–268 (TLKGATNGIVFLFTPNITELSNPNTW) the chain is Extracellular. Asparagine 258 carries an N-linked (GlcNAc...) asparagine glycan. Residues 269 to 289 (LDAGAQVFYSFSLAFGGLISF) form a helical membrane-spanning segment. Over 290-304 (SSYNSVHNNCEMDSV) the chain is Cytoplasmic. Residues 305 to 325 (IVSIINGFTSVYAATVVYSII) form a helical membrane-spanning segment. The Extracellular segment spans residues 326 to 413 (GFRATERFDD…TEAITKMPVS (88 aa)). Asparagine 354 and asparagine 368 each carry an N-linked (GlcNAc...) asparagine glycan. Residues 414–434 (PLWSVLFFIMLFCLGLSSMFG) traverse the membrane as a helical segment. Over 435–456 (NMEGVVVPLQDLNITPKKWPKE) the chain is Cytoplasmic. A helical membrane pass occupies residues 457–477 (LLTGLICLGTYLIAFIFTLNS). The Extracellular segment spans residues 478 to 490 (GQYWLSLLDSYAG). A helical transmembrane segment spans residues 491–511 (SIPLLIIAFCEMFAVVYVYGV). The Cytoplasmic segment spans residues 512 to 531 (DRFNKDIEFMIGHKPNIFWQ). Residues 532–552 (VTWRVVSPLIMLVIFLFFFVI) traverse the membrane as a helical segment. At 553 to 581 (EVNKQLMYSVWDPDYEEFPKSQKVPYPDW) the chain is on the extracellular side. Residues 582 to 602 (VYAVVVIVAGVPCLTIPCFAI) form a helical membrane-spanning segment. Residues 603-634 (YKLIRNYCQKSGDQHGLVNALSTASVNGDLKN) lie on the Cytoplasmic side of the membrane. Position 627 is a phosphoserine (serine 627).

The protein belongs to the sodium:neurotransmitter symporter (SNF) (TC 2.A.22) family. SLC6A19 subfamily. Interacts in a tissue-specific manner with ACE2 in small intestine and with CLTRN in the kidney. Interacts with CLTRN; this interaction is required for trafficking of SLC6A19 to the plasma membrane and for its catalytic activation in kidneys. Interacts with ACE2; this interaction is required for trafficking of SLC6A19 to the plasma membrane and for its catalytic activation in intestine. Interacts with ANPEP; the interaction positively regulates its amino acid transporter activity.

The protein localises to the membrane. The catalysed reaction is L-alanine(in) + Na(+)(in) = L-alanine(out) + Na(+)(out). It catalyses the reaction L-cysteine(in) + Na(+)(in) = L-cysteine(out) + Na(+)(out). The enzyme catalyses L-glutamine(in) + Na(+)(in) = L-glutamine(out) + Na(+)(out). It carries out the reaction glycine(in) + Na(+)(in) = glycine(out) + Na(+)(out). The catalysed reaction is L-isoleucine(in) + Na(+)(in) = L-isoleucine(out) + Na(+)(out). It catalyses the reaction L-leucine(in) + Na(+)(in) = L-leucine(out) + Na(+)(out). The enzyme catalyses L-methionine(in) + Na(+)(in) = L-methionine(out) + Na(+)(out). It carries out the reaction L-phenylalanine(in) + Na(+)(in) = L-phenylalanine(out) + Na(+)(out). The catalysed reaction is L-serine(in) + Na(+)(in) = L-serine(out) + Na(+)(out). It catalyses the reaction L-tryptophan(in) + Na(+)(in) = L-tryptophan(out) + Na(+)(out). The enzyme catalyses L-tyrosine(in) + Na(+)(in) = L-tyrosine(out) + Na(+)(out). It carries out the reaction L-valine(in) + Na(+)(in) = L-valine(out) + Na(+)(out). In terms of biological role, transporter that mediates resorption of neutral amino acids across the apical membrane of renal and intestinal epithelial cells. This uptake is sodium-dependent and chloride-independent. Requires CLTRN in kidney or ACE2 in intestine for cell surface expression and amino acid transporter activity. This is Sodium-dependent neutral amino acid transporter B(0)AT1 from Rattus norvegicus (Rat).